Reading from the N-terminus, the 87-residue chain is Phosphoribosyl-ATP pyrophosphatase (87 aa).

Belongs to the PRA-PH family.

It localises to the cytoplasm. The enzyme catalyses 1-(5-phospho-beta-D-ribosyl)-ATP + H2O = 1-(5-phospho-beta-D-ribosyl)-5'-AMP + diphosphate + H(+). Its pathway is amino-acid biosynthesis; L-histidine biosynthesis; L-histidine from 5-phospho-alpha-D-ribose 1-diphosphate: step 2/9. In Nocardioides sp. (strain ATCC BAA-499 / JS614), this protein is Phosphoribosyl-ATP pyrophosphatase.